A 131-amino-acid chain; its full sequence is Small ribosomal subunit protein uS8 (131 aa).

It belongs to the universal ribosomal protein uS8 family. In terms of assembly, part of the 30S ribosomal subunit. Contacts proteins S5 and S12.

Functionally, one of the primary rRNA binding proteins, it binds directly to 16S rRNA central domain where it helps coordinate assembly of the platform of the 30S subunit. This is Small ribosomal subunit protein uS8 from Chlorobium chlorochromatii (strain CaD3).